The sequence spans 151 residues: Large ribosomal subunit protein bL9 (151 aa).

The protein belongs to the bacterial ribosomal protein bL9 family.

Functionally, binds to the 23S rRNA. The polypeptide is Large ribosomal subunit protein bL9 (Mycolicibacterium gilvum (strain PYR-GCK) (Mycobacterium gilvum (strain PYR-GCK))).